Consider the following 100-residue polypeptide: MSTSTSCPIPGGRDQLPDCYSTTPGGTLYATTPGGTRIIYDRKFLLECKNSPIARTPPCCLPQIPGVTTPPTAPLSKLEELKEQETEEEIPDDAQFEMDI.

The YXXXXLphi motif motif lies at 40–46; it reads YDRKFLL. The interval 81–100 is disordered; it reads LKEQETEEEIPDDAQFEMDI. Over residues 85-100 the composition is skewed to acidic residues; sequence ETEEEIPDDAQFEMDI. Positions 96–100 match the TOS motif motif; sequence FEMDI.

It belongs to the eIF4E-binding protein family. As to quaternary structure, interacts with EIF4E. Interacts with RPA2 (in unphosphorylated form via N-terminus); the interaction enhances EIF4EBP3-mediated inhibition of EIF4E-mediated mRNA nuclear export. In terms of processing, phosphorylated. Expression is highest in skeletal muscle, heart, kidney, and pancreas, whereas there is very little expression in brain and thymus.

The protein resides in the cytoplasm. Its subcellular location is the nucleus. Its function is as follows. Repressor of translation initiation that regulates EIF4E activity by preventing its assembly into the eIF4F complex: the hypophosphorylated form competes with EIF4G1/EIF4G3 and strongly binds to EIF4E, leading to repression of translation. In contrast, the hyperphosphorylated form dissociates from EIF4E, allowing interaction between EIF4G1/EIF4G3 and EIF4E, leading to initiation of translation. Inhibits EIF4E-mediated mRNA nuclear export. This chain is Eukaryotic translation initiation factor 4E-binding protein 3 (EIF4EBP3), found in Homo sapiens (Human).